A 242-amino-acid chain; its full sequence is Orotidine 5'-phosphate decarboxylase (242 aa).

Substrate contacts are provided by residues Asp21, Lys43, 71 to 80 (DLKFFDVPET), Thr124, Arg185, Gln195, Gly215, and Arg216. Catalysis depends on Lys73, which acts as the Proton donor.

It belongs to the OMP decarboxylase family. Type 1 subfamily. As to quaternary structure, homodimer.

The catalysed reaction is orotidine 5'-phosphate + H(+) = UMP + CO2. It participates in pyrimidine metabolism; UMP biosynthesis via de novo pathway; UMP from orotate: step 2/2. Catalyzes the decarboxylation of orotidine 5'-monophosphate (OMP) to uridine 5'-monophosphate (UMP). The protein is Orotidine 5'-phosphate decarboxylase of Methylococcus capsulatus (strain ATCC 33009 / NCIMB 11132 / Bath).